Here is a 113-residue protein sequence, read N- to C-terminus: Integration host factor subunit alpha (113 aa).

Disordered stretches follow at residues 59-80 (GNFQ…GETI) and 94-113 (QKLK…ASAE). The segment covering 104-113 (NSPPDPASAE) has biased composition (pro residues).

Belongs to the bacterial histone-like protein family. As to quaternary structure, heterodimer of an alpha and a beta chain.

Its function is as follows. This protein is one of the two subunits of integration host factor, a specific DNA-binding protein that functions in genetic recombination as well as in transcriptional and translational control. This chain is Integration host factor subunit alpha, found in Bordetella pertussis (strain Tohama I / ATCC BAA-589 / NCTC 13251).